Consider the following 152-residue polypeptide: Endoribonuclease YbeY (152 aa).

Positions 118, 122, and 128 each coordinate Zn(2+).

The protein belongs to the endoribonuclease YbeY family. Zn(2+) is required as a cofactor.

It is found in the cytoplasm. Functionally, single strand-specific metallo-endoribonuclease involved in late-stage 70S ribosome quality control and in maturation of the 3' terminus of the 16S rRNA. This Pelotomaculum thermopropionicum (strain DSM 13744 / JCM 10971 / SI) protein is Endoribonuclease YbeY.